The following is a 339-amino-acid chain: Diacylglycerol acyltransferase/mycolyltransferase Ag85A (339 aa).

The first 43 residues, 1 to 43 (MKLVDRFRGAVTGMPRRLMVGAVGAALLSGLVGFVGGSATASA), serve as a signal peptide directing secretion. Substrate is bound at residue 85 to 86 (MR). The interval 101–111 (FEWYNQSGISV) is fibronectin-binding. The cysteines at positions 130 and 135 are disulfide-linked. Substrate is bound by residues serine 169 and aspartate 197. Serine 169 functions as the Nucleophile in the catalytic mechanism. The active site involves glutamate 272. Substrate is bound by residues 274-277 (FVRT), lysine 281, and 304-306 (HDW). Histidine 304 is an active-site residue.

This sequence belongs to the mycobacterial A85 antigen family. Homodimer.

The protein resides in the secreted. It localises to the cell wall. Its subcellular location is the cytoplasm. The catalysed reaction is an acyl-CoA + a 1,2-diacyl-sn-glycerol = a triacyl-sn-glycerol + CoA. It carries out the reaction 2 alpha,alpha'-trehalose 6-mycolate = alpha,alpha'-trehalose 6,6'-bismycolate + alpha,alpha-trehalose. Its function is as follows. The antigen 85 proteins (FbpA, FbpB, FbpC) are responsible for the high affinity of mycobacteria for fibronectin, a large adhesive glycoprotein, which facilitates the attachment of M.tuberculosis to murine alveolar macrophages (AMs). They also help to maintain the integrity of the cell wall by catalyzing the transfer of mycolic acids to cell wall arabinogalactan, and through the synthesis of alpha,alpha-trehalose dimycolate (TDM, cord factor). They catalyze the transfer of a mycoloyl residue from one molecule of alpha,alpha-trehalose monomycolate (TMM) to another TMM, leading to the formation of TDM. FbpA mediates triacylglycerol (TAG) formation with long-chain acyl-CoA as the acyl donor and 1,2-dipalmitoyl-sn-glycerol (1,2-dipalmitin) as the acyl acceptor. It has a preference for C26:0-CoA over C18:1-CoA. The protein is Diacylglycerol acyltransferase/mycolyltransferase Ag85A (fbpA) of Mycobacterium gordonae.